The chain runs to 143 residues: Nucleoside diphosphate kinase (143 aa).

Residues Lys11, Phe59, Arg87, Thr93, Arg104, and Asn114 each coordinate ATP. His117 functions as the Pros-phosphohistidine intermediate in the catalytic mechanism.

This sequence belongs to the NDK family. Homotetramer. Requires Mg(2+) as cofactor.

It is found in the cytoplasm. It catalyses the reaction a 2'-deoxyribonucleoside 5'-diphosphate + ATP = a 2'-deoxyribonucleoside 5'-triphosphate + ADP. It carries out the reaction a ribonucleoside 5'-diphosphate + ATP = a ribonucleoside 5'-triphosphate + ADP. Functionally, major role in the synthesis of nucleoside triphosphates other than ATP. The ATP gamma phosphate is transferred to the NDP beta phosphate via a ping-pong mechanism, using a phosphorylated active-site intermediate. This is Nucleoside diphosphate kinase from Clostridium perfringens (strain ATCC 13124 / DSM 756 / JCM 1290 / NCIMB 6125 / NCTC 8237 / Type A).